Consider the following 478-residue polypeptide: H(+)/Cl(-) exchange transporter ClcA (478 aa).

Topologically, residues 1-32 (MTHSTQQLSPEGVAEGKRGRLIRELVNRDKTP) are cytoplasmic. A helical membrane pass occupies residues 33 to 69 (LIILIMAAVVGVVTGLLGVAFDRGVDWVQQQRLLALA). Over 70-76 (NVADSAL) the chain is Periplasmic. Residues 77–100 (LVWPLAFIMSALLAMMGYFLVSRF) form a helical membrane-spanning segment. Residues 106–110 (GSGIP) carry the Selectivity filter part_1 motif. Serine 107 lines the chloride pocket. An intramembrane region (helical) is located at residues 109–116 (IPEIEGAM). Topologically, residues 117 to 123 (EEMRPVR) are cytoplasmic. 2 helical membrane passes run 124–141 (WWRV…TLGA) and 148–166 (EGPM…VDIF). A Selectivity filter part_2 motif is present at residues 146–150 (GREGP). The Cytoplasmic portion of the chain corresponds to 167-176 (RLRSPEARHS). 2 intramembrane regions (helical) span residues 177–189 (LLAT…LSAA) and 193–201 (PLAGILFVI). Over 202-214 (EEMRSQFRYSLVS) the chain is Cytoplasmic. The helical transmembrane segment at 215 to 232 (IKAVFIGVITSTIVYRYF) threads the bilayer. Residues 233-252 (NGERAIIEVGKLSDAPLNTL) lie on the Periplasmic side of the membrane. Residues 253–281 (WLYLLLGIIFGAVGVIFNALIFRTQDMFV) traverse the membrane as a helical segment. The Cytoplasmic segment spans residues 282 to 287 (RFHGGD). The helical transmembrane segment at 288-309 (WRKLVLIGGLLGGMCGLLALLH) threads the bilayer. Residues 310 to 329 (GNAVGGGFALIPIAAAGNFS) lie on the Periplasmic side of the membrane. 2 consecutive transmembrane segments (helical) span residues 330 to 349 (IGML…LCFG) and 355 to 376 (GIFA…LSCA). The Selectivity filter part_3 signature appears at 355 to 359 (GIFAP). Chloride is bound by residues isoleucine 356 and phenylalanine 357. Residues 377 to 386 (HFFPQYGIEA) lie on the Periplasmic side of the membrane. Positions 387–401 (GTFAIAGMGALFAAS) form an intramembrane region, helical. Positions 402–404 (VRA) form an intramembrane region, note=Loop between two helices. An intramembrane region (helical) is located at residues 405-416 (PLTGIVLVLEMT). Positions 417-421 (DNYQL) form an intramembrane region, note=Loop between two helices. Residues 422-438 (ILPMIVTCLGATLIAQF) traverse the membrane as a helical segment. Residues 439-478 (MGGKPLYSAILARTLAKQEQARATVIAQEPAVENTPQTGR) are Cytoplasmic-facing. Chloride is bound at residue tyrosine 445.

The protein belongs to the chloride channel (TC 2.A.49) family. ClcA subfamily. In terms of assembly, homodimer.

It is found in the cell inner membrane. The catalysed reaction is 2 chloride(in) + H(+)(out) = 2 chloride(out) + H(+)(in). Functionally, proton-coupled chloride transporter. Functions as antiport system and exchanges two chloride ions for 1 proton. Probably acts as an electrical shunt for an outwardly-directed proton pump that is linked to amino acid decarboxylation, as part of the extreme acid resistance (XAR) response. This chain is H(+)/Cl(-) exchange transporter ClcA, found in Yersinia pseudotuberculosis serotype IB (strain PB1/+).